The chain runs to 505 residues: Glutamate--tRNA ligase (505 aa).

The 'HIGH' region signature appears at 12-22 (PSPTGDPHVGT). Positions 253–257 (KLSKR) match the 'KMSKS' region motif. An ATP-binding site is contributed by lysine 256.

Belongs to the class-I aminoacyl-tRNA synthetase family. Glutamate--tRNA ligase type 1 subfamily. In terms of assembly, monomer.

It localises to the cytoplasm. The enzyme catalyses tRNA(Glu) + L-glutamate + ATP = L-glutamyl-tRNA(Glu) + AMP + diphosphate. Its function is as follows. Catalyzes the attachment of glutamate to tRNA(Glu) in a two-step reaction: glutamate is first activated by ATP to form Glu-AMP and then transferred to the acceptor end of tRNA(Glu). This chain is Glutamate--tRNA ligase, found in Chlamydia felis (strain Fe/C-56) (Chlamydophila felis).